The chain runs to 103 residues: Large ribosomal subunit protein uL24 (103 aa).

The protein belongs to the universal ribosomal protein uL24 family. Part of the 50S ribosomal subunit.

One of two assembly initiator proteins, it binds directly to the 5'-end of the 23S rRNA, where it nucleates assembly of the 50S subunit. Its function is as follows. One of the proteins that surrounds the polypeptide exit tunnel on the outside of the subunit. This chain is Large ribosomal subunit protein uL24, found in Bacillus licheniformis (strain ATCC 14580 / DSM 13 / JCM 2505 / CCUG 7422 / NBRC 12200 / NCIMB 9375 / NCTC 10341 / NRRL NRS-1264 / Gibson 46).